Reading from the N-terminus, the 176-residue chain is NADH-dependent flavin reductase (176 aa).

FAD contacts are provided by residues 39–46 and 48–49; these read EDSVHGMT and NA. S52 contributes to the NAD(+) binding site. Residues 63–65, 69–70, and 95–96 each bind FAD; these read SIS, KM, and HF. NAD(+) contacts are provided by residues H137 and 157–160; that span reads FYTG.

This sequence belongs to the non-flavoprotein flavin reductase family. Homodimer. 4-nitrophenol 2-monooxygenase complex consists of an oxygenase component NphA1 and a flavin reductase component NphA2.

The enzyme catalyses a reduced flavin + NAD(+) = an oxidized flavin + NADH + 2 H(+). In terms of biological role, catalyzes the reduction of FAD with the concomitant oxidation of NADH. NAD is the physiological electron donor. Subsequently, the reduced flavins diffuse to the oxygenase component NphA2. This chain is NADH-dependent flavin reductase (nphA2), found in Rhodococcus sp.